A 91-amino-acid chain; its full sequence is Probable Fe(2+)-trafficking protein (91 aa).

Belongs to the Fe(2+)-trafficking protein family.

In terms of biological role, could be a mediator in iron transactions between iron acquisition and iron-requiring processes, such as synthesis and/or repair of Fe-S clusters in biosynthetic enzymes. This is Probable Fe(2+)-trafficking protein from Ralstonia nicotianae (strain ATCC BAA-1114 / GMI1000) (Ralstonia solanacearum).